The primary structure comprises 435 residues: 5-methylthioadenosine/S-adenosylhomocysteine deaminase (435 aa).

H65 and H67 together coordinate Zn(2+). E94, R150, and H189 together coordinate substrate. Position 216 (H216) interacts with Zn(2+). Substrate-binding residues include E219 and D304. D304 lines the Zn(2+) pocket.

Belongs to the metallo-dependent hydrolases superfamily. MTA/SAH deaminase family. The cofactor is Zn(2+).

The catalysed reaction is S-adenosyl-L-homocysteine + H2O + H(+) = S-inosyl-L-homocysteine + NH4(+). The enzyme catalyses S-methyl-5'-thioadenosine + H2O + H(+) = S-methyl-5'-thioinosine + NH4(+). Catalyzes the deamination of 5-methylthioadenosine and S-adenosyl-L-homocysteine into 5-methylthioinosine and S-inosyl-L-homocysteine, respectively. Is also able to deaminate adenosine. The protein is 5-methylthioadenosine/S-adenosylhomocysteine deaminase of Bacillus anthracis (strain A0248).